The chain runs to 149 residues: Interleukin-2 (149 aa).

An N-terminal signal peptide occupies residues 1–20; it reads MYRMQLLSCIALTLAVLANS. O-linked (GalNAc...) threonine glycosylation is present at Thr-23. Residues Cys-78 and Cys-121 are joined by a disulfide bond. Asn-106 is a glycosylation site (N-linked (GlcNAc...) asparagine).

It belongs to the IL-2 family.

It is found in the secreted. Cytokine produced by activated CD4-positive helper T-cells and to a lesser extend activated CD8-positive T-cells and natural killer (NK) cells that plays pivotal roles in the immune response and tolerance. Binds to a receptor complex composed of either the high-affinity trimeric IL-2R (IL2RA/CD25, IL2RB/CD122 and IL2RG/CD132) or the low-affinity dimeric IL-2R (IL2RB and IL2RG). Interaction with the receptor leads to oligomerization and conformation changes in the IL-2R subunits resulting in downstream signaling starting with phosphorylation of JAK1 and JAK3. In turn, JAK1 and JAK3 phosphorylate the receptor to form a docking site leading to the phosphorylation of several substrates including STAT5. This process leads to activation of several pathways including STAT, phosphoinositide-3-kinase/PI3K and mitogen-activated protein kinase/MAPK pathways. Functions as a T-cell growth factor and can increase NK-cell cytolytic activity as well. Promotes strong proliferation of activated B-cells and subsequently immunoglobulin production. Plays a pivotal role in regulating the adaptive immune system by controlling the survival and proliferation of regulatory T-cells, which are required for the maintenance of immune tolerance. Moreover, participates in the differentiation and homeostasis of effector T-cell subsets, including Th1, Th2, Th17 as well as memory CD8-positive T-cells. The polypeptide is Interleukin-2 (IL2) (Equus caballus (Horse)).